The sequence spans 506 residues: UBX domain-containing protein 4 (506 aa).

The segment at 1-199 (MLWFQGAIPA…PAEDLTVRVE (199 aa)) is interaction with UBQLN1. Residues 1 to 411 (MLWFQGAIPA…VHSSSGDIWT (411 aa)) are Cytoplasmic-facing. Residues 110–194 (QQMHSSKGEA…CSNQRPAEDL (85 aa)) are disordered. Polar residues-rich tracts occupy residues 120-136 (SVTN…TPSA) and 153-167 (LCET…SDTA). The 79-residue stretch at 313–391 (DRSTIARIQF…ELAPSASVVL (79 aa)) folds into the UBX domain. Residues 412-432 (LLGTVLYPFLAIWRLISNFLF) lie within the membrane without spanning it. The Cytoplasmic segment spans residues 433 to 506 (SNPPPAQTSA…TWNGNSTQQM (74 aa)). The tract at residues 437 to 506 (PAQTSARATS…TWNGNSTQQM (70 aa)) is disordered. Over residues 444–456 (ATSTEPSNSASSS) the composition is skewed to low complexity. Over residues 457–489 (KSEKREPVRKRMLEKRGEDFKKEGKIYRLRTQD) the composition is skewed to basic and acidic residues. Thr487 carries the phosphothreonine modification. Residues 496 to 506 (NTWNGNSTQQM) are compositionally biased toward polar residues.

Directly interacts with VCP. Interacts with UBQLN1. Forms a complex with VCP and UBQLN1. As to expression, expressed in many tissues, including brain, heart, kidney, liver, muscle and spleen (at protein level).

The protein resides in the endoplasmic reticulum membrane. Its subcellular location is the nucleus envelope. Involved in endoplasmic reticulum-associated protein degradation (ERAD). Acts as a platform to recruit both UBQLN1 and VCP to the ER during ERAD. This chain is UBX domain-containing protein 4 (Ubxn4), found in Mus musculus (Mouse).